The primary structure comprises 545 residues: Threonine--tRNA ligase catalytic subunit (545 aa).

Residues 139-433 are catalytic; that stretch reads DHRLIGEKLD…LLEHFKGKLP (295 aa). Residues cysteine 231, histidine 282, and histidine 410 each coordinate Zn(2+).

Belongs to the class-II aminoacyl-tRNA synthetase family. Homodimer. Probably interacts with its editing subunit. Zn(2+) is required as a cofactor.

The protein resides in the cytoplasm. It catalyses the reaction tRNA(Thr) + L-threonine + ATP = L-threonyl-tRNA(Thr) + AMP + diphosphate + H(+). Its function is as follows. Catalyzes the attachment of threonine to tRNA(Thr) in a two-step reaction: L-threonine is first activated by ATP to form Thr-AMP and then transferred to the acceptor end of tRNA(Thr). Also activates L-serine and transfers it to tRNA(Thr) but cannot deacylate incorrectly charged amino acid; unlike most archaea the editing function is found in a freestanding protein. The polypeptide is Threonine--tRNA ligase catalytic subunit (Saccharolobus islandicus (strain M.16.4 / Kamchatka #3) (Sulfolobus islandicus)).